The following is a 105-amino-acid chain: Large ribosomal subunit protein uL24 (105 aa).

This sequence belongs to the universal ribosomal protein uL24 family. Part of the 50S ribosomal subunit.

Functionally, one of two assembly initiator proteins, it binds directly to the 5'-end of the 23S rRNA, where it nucleates assembly of the 50S subunit. Its function is as follows. One of the proteins that surrounds the polypeptide exit tunnel on the outside of the subunit. This chain is Large ribosomal subunit protein uL24, found in Xylella fastidiosa (strain M23).